A 235-amino-acid polypeptide reads, in one-letter code: Urease accessory protein UreF (235 aa).

It belongs to the UreF family. In terms of assembly, ureD, UreF and UreG form a complex that acts as a GTP-hydrolysis-dependent molecular chaperone, activating the urease apoprotein by helping to assemble the nickel containing metallocenter of UreC. The UreE protein probably delivers the nickel.

The protein resides in the cytoplasm. Required for maturation of urease via the functional incorporation of the urease nickel metallocenter. The polypeptide is Urease accessory protein UreF (Haemophilus influenzae (strain 86-028NP)).